A 361-amino-acid chain; its full sequence is Myricetin 3-O-methyltransferase 3 (361 aa).

Asp229 lines the S-adenosyl-L-methionine pocket. His267 acts as the Proton acceptor in catalysis.

The protein belongs to the class I-like SAM-binding methyltransferase superfamily. Cation-independent O-methyltransferase family. Homodimer. Mainly expressed in leaves secreting glandular trichomes types 1 and 4 and, to a lesser extent, in storage trichomes type 6.

The enzyme catalyses kaempferol + S-adenosyl-L-methionine = 3-O-methylkaempferol + S-adenosyl-L-homocysteine + H(+). It carries out the reaction quercetin + S-adenosyl-L-methionine = 3',4',5,7-tetrahydroxy-3-methoxyflavone + S-adenosyl-L-homocysteine + H(+). It catalyses the reaction myricetin + S-adenosyl-L-methionine = 3-O-methylmyricetin + S-adenosyl-L-homocysteine + H(+). The catalysed reaction is kaempferide + S-adenosyl-L-methionine = 3,4'-O-dimethylkaempferol + S-adenosyl-L-homocysteine + H(+). The enzyme catalyses isorhamnetin + S-adenosyl-L-methionine = 3,3'-O-dimethylquercetin + S-adenosyl-L-homocysteine + H(+). It carries out the reaction rhamnetin + S-adenosyl-L-methionine = 3',4',5-trihydroxy-3,7-dimethoxyflavone + S-adenosyl-L-homocysteine + H(+). It catalyses the reaction laricitrin + S-adenosyl-L-methionine = 3,3'-O-dimethylmyricetin + S-adenosyl-L-homocysteine + H(+). The catalysed reaction is syringetin + S-adenosyl-L-methionine = 3,3',5'-O-trimethylmyricetin + S-adenosyl-L-homocysteine + H(+). It functions in the pathway flavonoid metabolism. Flavonoid 3-O-methyltransferase involved in the biosynthesis of polymethoxylated flavonoids natural products such as myricetin derivatives, aroma compounds possessing antioxidant properties and exhibiting pharmacological activities such as anti-carcinogen, anti-viral, anti-thrombotic, anti-diabetic, anti-atherosclerotic, and anti-inflammatory effects. Catalyzes S-adenosylmethionine-dependent regioselective 3-O-methylation of flavonoids; active on various hydroxylated flavonoid substrates. Active with myricetin, quercetin, kaempferol, 4'-methyl kaempferol (kaempferide), 3'-methyl quercetin (isorhamnetin), 7-methyl quercetin (rhamnetin), 3'-methyl myricetin (laricitrin) and 3',5'-dimethyl myricetin (syringetin), thus producing 3-methyl myricetin, 3-methyl quercetin, 3-methyl kaempferol, 4',3-methyl kaempferol, 3',3-methyl quercetin, 7,3-dimethyl quercetin, 3',3-dimethyl myricetin and 3',5',3-dimethyl myricetin, respectively. Inactive with flavonol substrates methylated at the 3-hydroxyl position such as 3-O-methyl quercetin. This chain is Myricetin 3-O-methyltransferase 3, found in Solanum habrochaites (Wild tomato).